The following is a 457-amino-acid chain: C4-dicarboxylate transport protein (457 aa).

The next 9 helical transmembrane spans lie at Phe-22–Ala-42, Leu-55–Met-75, Val-90–Val-110, Leu-138–Gly-158, Gly-168–Val-188, Leu-209–Ile-229, Trp-242–Val-262, Leu-335–Ala-357, and Ala-376–Val-396.

Belongs to the dicarboxylate/amino acid:cation symporter (DAACS) (TC 2.A.23) family.

The protein resides in the cell inner membrane. Responsible for the transport of dicarboxylates such as succinate, fumarate, and malate from the periplasm across the membrane. In Xanthomonas oryzae pv. oryzae (strain MAFF 311018), this protein is C4-dicarboxylate transport protein.